The primary structure comprises 761 residues: Mitochondrial inner membrane m-AAA protease component YTA10 (761 aa).

The Mitochondrial matrix portion of the chain corresponds to 1–115 (MMMWQRYARG…SLSEYFRSKE (115 aa)). Residues 67 to 101 (SWTRLNENRPNKEGEGKNNGNKDNNSNKEDGKDKR) form a disordered region. Basic and acidic residues-rich tracts occupy residues 72-82 (NENRPNKEGEG) and 91-101 (NSNKEDGKDKR). The chain crosses the membrane as a helical span at residues 116–136 (FANTMFLTIGFTIIFTLLTPS). At 137–223 (SNNSGDDSNR…IPIKYIERSS (87 aa)) the chain is on the mitochondrial intermembrane side. A helical transmembrane segment spans residues 224–244 (PFTFLFPFLPTIILLGGLYFI). Topologically, residues 245–761 (TRKINSSPPN…EPPEAPAATN (517 aa)) are mitochondrial matrix. ATP is bound by residues Val290, Ala291, Thr332, Gly333, Lys334, Thr335, Leu336, and His472. His558 is a Zn(2+) binding site. Glu559 is an active-site residue. Positions 562 and 634 each coordinate Zn(2+).

In the N-terminal section; belongs to the AAA ATPase family. The protein in the C-terminal section; belongs to the peptidase M41 family. Component of the 850 kDa m-AAA protease complex, a heterohexamer composed of YTA12/RCA1 and YTA10/AFG3. Associates with the prohibitin complex, composed of PHB1 and PHB2, inhibiting the activity of the m-AAA protease complex. It depends on Zn(2+) as a cofactor.

It is found in the mitochondrion inner membrane. The enzyme catalyses ATP + H2O = ADP + phosphate + H(+). Its activity is regulated as follows. ATP hydrolysis is coordinated within m-AAA protease ring complexes: ATP-binding to YTA10/AFG3 inhibits ATP hydrolysis by the neighboring subunit YTA12/RCA1, leading to coordinated ATP hydrolysis within the AAA ATPase ring. In terms of biological role, catalytic component of the m-AAA protease, a protease that plays a key role in proteostasis of inner mitochondrial membrane proteins. YTA10/AFG3 possesses both ATPase and protease activities: the ATPase activity is required to unfold substrates, threading them into the internal proteolytic cavity for hydrolysis into small peptide fragments. The complex is necessary for the assembly of mitochondrial respiratory chain and ATPase complexes. The m-AAA protease carries out protein quality control in the inner membrane of the mitochondria by mediating degradation of mistranslated or misfolded polypeptides. It also mediates protein maturation of the mitochondrial ribosomal subunit MRPL32/bL32m by catalyzing the cleavage of the presequence of MRPL32/bL32m prior to assembly into the mitochondrial ribosome. Promotes maturation of cytochrome c peroxidase (CCP1) by acting as a membrane protein dislocase via its ATPase activity: pulls the CCP1 transmembrane to the matrix prior to processing by the rhomboid protease PCP1. The membrane protein dislocase activity is also required to dislocate moderately hydrophobic transmembrane segments from the membrane. This Saccharomyces cerevisiae (strain ATCC 204508 / S288c) (Baker's yeast) protein is Mitochondrial inner membrane m-AAA protease component YTA10.